A 211-amino-acid chain; its full sequence is Synaptosomal-associated protein 23 (211 aa).

An N-acetylmethionine modification is found at Met1. A phosphoserine mark is found at Ser5, Ser6, Ser20, Ser23, and Ser34. Residues 14-76 (HQITDESLES…RETEKTLTEL (63 aa)) enclose the t-SNARE coiled-coil homology 1 domain. The stretch at 23 to 76 (STRRILGLAIESQDAGIKTITMLDEQKEQLNRIEEGLDQINKDMRETEKTLTEL) forms a coiled coil. S-palmitoyl cysteine attachment occurs at residues Cys79, Cys80, Cys83, Cys85, and Cys87. Ser110 carries the post-translational modification Phosphoserine. Cys112 carries the S-palmitoyl cysteine lipid modification. Positions 146 to 208 (DAREDEMEEN…DIANARAKKL (63 aa)) constitute a t-SNARE coiled-coil homology 2 domain. Ser161 is modified (phosphoserine).

The protein belongs to the SNAP-25 family. As to quaternary structure, homotetramer (via coiled-coil domain), also forms heterotetramers with STX4 and VAMP3. Found in a complex with VAMP8 and STX1A. Found in a complex with VAMP8 and STX4 in pancreas. Interacts simultaneously with SNAPIN and SYN4. Interacts with STX1A. Interacts with STX12. Interacts tightly to multiple syntaxins and synaptobrevins/VAMPs. Interacts with ZDHHC13 (via ANK repeats). Interacts with ZDHHC17 (via ANK repeats). Ubiquitous. Highest levels where found in placenta.

It localises to the cell membrane. The protein resides in the synapse. The protein localises to the synaptosome. Its function is as follows. Essential component of the high affinity receptor for the general membrane fusion machinery and an important regulator of transport vesicle docking and fusion. The chain is Synaptosomal-associated protein 23 (SNAP23) from Homo sapiens (Human).